Here is a 557-residue protein sequence, read N- to C-terminus: Dihydroxy-acid dehydratase (557 aa).

Asp78 serves as a coordination point for Mg(2+). Cys119 serves as a coordination point for [2Fe-2S] cluster. Mg(2+)-binding residues include Asp120 and Lys121. N6-carboxylysine is present on Lys121. Cys192 is a binding site for [2Fe-2S] cluster. Glu443 lines the Mg(2+) pocket. Ser469 functions as the Proton acceptor in the catalytic mechanism.

This sequence belongs to the IlvD/Edd family. As to quaternary structure, homodimer. The cofactor is [2Fe-2S] cluster. Mg(2+) serves as cofactor.

The enzyme catalyses (2R)-2,3-dihydroxy-3-methylbutanoate = 3-methyl-2-oxobutanoate + H2O. The catalysed reaction is (2R,3R)-2,3-dihydroxy-3-methylpentanoate = (S)-3-methyl-2-oxopentanoate + H2O. The protein operates within amino-acid biosynthesis; L-isoleucine biosynthesis; L-isoleucine from 2-oxobutanoate: step 3/4. Its pathway is amino-acid biosynthesis; L-valine biosynthesis; L-valine from pyruvate: step 3/4. Its function is as follows. Functions in the biosynthesis of branched-chain amino acids. Catalyzes the dehydration of (2R,3R)-2,3-dihydroxy-3-methylpentanoate (2,3-dihydroxy-3-methylvalerate) into 2-oxo-3-methylpentanoate (2-oxo-3-methylvalerate) and of (2R)-2,3-dihydroxy-3-methylbutanoate (2,3-dihydroxyisovalerate) into 2-oxo-3-methylbutanoate (2-oxoisovalerate), the penultimate precursor to L-isoleucine and L-valine, respectively. The chain is Dihydroxy-acid dehydratase from Sulfurihydrogenibium sp. (strain YO3AOP1).